The chain runs to 218 residues: ATP phosphoribosyltransferase (218 aa).

Belongs to the ATP phosphoribosyltransferase family. Short subfamily. Heteromultimer composed of HisG and HisZ subunits.

It is found in the cytoplasm. It carries out the reaction 1-(5-phospho-beta-D-ribosyl)-ATP + diphosphate = 5-phospho-alpha-D-ribose 1-diphosphate + ATP. Its pathway is amino-acid biosynthesis; L-histidine biosynthesis; L-histidine from 5-phospho-alpha-D-ribose 1-diphosphate: step 1/9. Functionally, catalyzes the condensation of ATP and 5-phosphoribose 1-diphosphate to form N'-(5'-phosphoribosyl)-ATP (PR-ATP). Has a crucial role in the pathway because the rate of histidine biosynthesis seems to be controlled primarily by regulation of HisG enzymatic activity. The chain is ATP phosphoribosyltransferase from Synechococcus elongatus (strain ATCC 33912 / PCC 7942 / FACHB-805) (Anacystis nidulans R2).